A 531-amino-acid chain; its full sequence is Phosphoinositide phospholipase C 9 (531 aa).

The 147-residue stretch at 107 to 253 (RDMNAPLSHY…LQNKILISRR (147 aa)) folds into the PI-PLC X-box domain. The PI-PLC Y-box domain occupies 265-385 (ENGVELEIQE…GYVKKPNFLL (121 aa)). The residue at position 276 (Ser276) is a Phosphoserine. Positions 386-513 (NAGSSGVFYP…EGIRAVPLYD (128 aa)) constitute a C2 domain.

It depends on Ca(2+) as a cofactor. As to expression, expressed in leaves, roots, flowers and siliques.

It is found in the cell membrane. It catalyses the reaction a 1,2-diacyl-sn-glycero-3-phospho-(1D-myo-inositol-4,5-bisphosphate) + H2O = 1D-myo-inositol 1,4,5-trisphosphate + a 1,2-diacyl-sn-glycerol + H(+). Functionally, the production of the second messenger molecules diacylglycerol (DAG) and inositol 1,4,5-trisphosphate (IP3) is mediated by activated phosphatidylinositol-specific phospholipase C enzymes. The sequence is that of Phosphoinositide phospholipase C 9 (PLC9) from Arabidopsis thaliana (Mouse-ear cress).